The chain runs to 80 residues: MPKRVLQGVVVSDKNDKTVVVKVERRYSHPLLQKTVRQSKKYKAHDENNQFKVGDLVSIQESAPISKDKRWVVLTNEAAG.

The protein belongs to the universal ribosomal protein uS17 family. As to quaternary structure, part of the 30S ribosomal subunit.

Functionally, one of the primary rRNA binding proteins, it binds specifically to the 5'-end of 16S ribosomal RNA. The chain is Small ribosomal subunit protein uS17 from Brucella anthropi (strain ATCC 49188 / DSM 6882 / CCUG 24695 / JCM 21032 / LMG 3331 / NBRC 15819 / NCTC 12168 / Alc 37) (Ochrobactrum anthropi).